The sequence spans 372 residues: Bifunctional enzyme IspD/IspF (372 aa).

The interval 1–211 (MLDISLIMLG…SALKAPENEL (211 aa)) is 2-C-methyl-D-erythritol 4-phosphate cytidylyltransferase. The tract at residues 212-372 (FVGSGFDVHE…SLKFYNWTQI (161 aa)) is 2-C-methyl-D-erythritol 2,4-cyclodiphosphate synthase. Residues Asp-218 and His-220 each contribute to the a divalent metal cation site. 4-CDP-2-C-methyl-D-erythritol 2-phosphate contacts are provided by residues 218–220 (DVH) and 244–245 (HS). Position 252 (His-252) interacts with a divalent metal cation. 4-CDP-2-C-methyl-D-erythritol 2-phosphate contacts are provided by residues 266–268 (DIG), 271–275 (FPDTD), 342–345 (TTTE), Phe-349, and Arg-352.

The protein in the N-terminal section; belongs to the IspD/TarI cytidylyltransferase family. IspD subfamily. It in the C-terminal section; belongs to the IspF family. A divalent metal cation serves as cofactor.

It carries out the reaction 2-C-methyl-D-erythritol 4-phosphate + CTP + H(+) = 4-CDP-2-C-methyl-D-erythritol + diphosphate. The enzyme catalyses 4-CDP-2-C-methyl-D-erythritol 2-phosphate = 2-C-methyl-D-erythritol 2,4-cyclic diphosphate + CMP. It functions in the pathway isoprenoid biosynthesis; isopentenyl diphosphate biosynthesis via DXP pathway; isopentenyl diphosphate from 1-deoxy-D-xylulose 5-phosphate: step 2/6. Its pathway is isoprenoid biosynthesis; isopentenyl diphosphate biosynthesis via DXP pathway; isopentenyl diphosphate from 1-deoxy-D-xylulose 5-phosphate: step 4/6. Functionally, bifunctional enzyme that catalyzes the formation of 4-diphosphocytidyl-2-C-methyl-D-erythritol from CTP and 2-C-methyl-D-erythritol 4-phosphate (MEP) (IspD), and catalyzes the conversion of 4-diphosphocytidyl-2-C-methyl-D-erythritol 2-phosphate (CDP-ME2P) to 2-C-methyl-D-erythritol 2,4-cyclodiphosphate (ME-CPP) with a corresponding release of cytidine 5-monophosphate (CMP) (IspF). The polypeptide is Bifunctional enzyme IspD/IspF (Campylobacter concisus (strain 13826)).